Reading from the N-terminus, the 310-residue chain is Fructose-bisphosphate aldolase/6-deoxy-5-ketofructose 1-phosphate synthase (310 aa).

Residues 48–49 (DQ), His53, Asp57, and Trp180 each bind substrate. Tyr182 (proton donor) is an active-site residue. Substrate contacts are provided by residues Arg184, 213 to 215 (KVN), 241 to 243 (AGG), and 270 to 271 (GR). Catalysis depends on Lys213, which acts as the Schiff-base intermediate with dihydroxyacetone-P. The active-site Schiff-base intermediate with substrate is Lys213.

It belongs to the DeoC/FbaB aldolase family.

It catalyses the reaction beta-D-fructose 1,6-bisphosphate = D-glyceraldehyde 3-phosphate + dihydroxyacetone phosphate. The enzyme catalyses beta-D-fructose 1,6-bisphosphate + methylglyoxal = 1-deoxy-D-threo-hexo-2,5-diulose 6-phosphate + D-glyceraldehyde 3-phosphate. It carries out the reaction beta-D-fructose 1-phosphate + methylglyoxal = 1-deoxy-D-threo-hexo-2,5-diulose 6-phosphate + D-glyceraldehyde. It functions in the pathway aromatic compound metabolism. Catalyzes the transaldolization of either fructose-1-P or fructose-1,6-bisphosphate with methylglyoxal to produce 6-deoxy-5-ketofructose-1-phosphate (DKFP). Also catalyzes the reversible aldol condensation of dihydroxyacetone phosphate (DHAP or glycerone-phosphate) with glyceraldehyde 3-phosphate (G3P or GAP) to produce fructose 1,6-bisphosphate (FBP). The chain is Fructose-bisphosphate aldolase/6-deoxy-5-ketofructose 1-phosphate synthase from Methanocaldococcus jannaschii (strain ATCC 43067 / DSM 2661 / JAL-1 / JCM 10045 / NBRC 100440) (Methanococcus jannaschii).